Here is a 258-residue protein sequence, read N- to C-terminus: Hydroxyacylglutathione hydrolase (258 aa).

Zn(2+) contacts are provided by His-52, His-54, Asp-56, His-57, His-109, Asp-126, and His-164.

It belongs to the metallo-beta-lactamase superfamily. Glyoxalase II family. Monomer. It depends on Zn(2+) as a cofactor.

The catalysed reaction is an S-(2-hydroxyacyl)glutathione + H2O = a 2-hydroxy carboxylate + glutathione + H(+). It functions in the pathway secondary metabolite metabolism; methylglyoxal degradation; (R)-lactate from methylglyoxal: step 2/2. Functionally, thiolesterase that catalyzes the hydrolysis of S-D-lactoyl-glutathione to form glutathione and D-lactic acid. The sequence is that of Hydroxyacylglutathione hydrolase from Xylella fastidiosa (strain M23).